The primary structure comprises 367 residues: Putative 12-oxophytodienoate reductase 11 (367 aa).

Residues Pro-26 to Thr-28, Ala-59, and Gln-101 each bind FMN. His-178–His-181 is a substrate binding site. The active-site Proton donor is Tyr-183. Arg-230 is an FMN binding site. Arg-270 is a binding site for substrate. FMN-binding positions include Gly-300 and Gly-321–Arg-322.

The protein belongs to the NADH:flavin oxidoreductase/NADH oxidase family. The cofactor is FMN.

Putative oxophytodienoate reductase that may be involved in the biosynthesis or metabolism of oxylipin signaling molecules. The sequence is that of Putative 12-oxophytodienoate reductase 11 (OPR11) from Oryza sativa subsp. japonica (Rice).